The primary structure comprises 202 residues: NADH-quinone oxidoreductase subunit B (202 aa).

[4Fe-4S] cluster-binding residues include C81, C82, C146, and C176.

This sequence belongs to the complex I 20 kDa subunit family. As to quaternary structure, NDH-1 is composed of 14 different subunits. Subunits NuoB, C, D, E, F, and G constitute the peripheral sector of the complex. The cofactor is [4Fe-4S] cluster.

It is found in the cell inner membrane. The catalysed reaction is a quinone + NADH + 5 H(+)(in) = a quinol + NAD(+) + 4 H(+)(out). Its function is as follows. NDH-1 shuttles electrons from NADH, via FMN and iron-sulfur (Fe-S) centers, to quinones in the respiratory chain. The immediate electron acceptor for the enzyme in this species is believed to be ubiquinone. Couples the redox reaction to proton translocation (for every two electrons transferred, four hydrogen ions are translocated across the cytoplasmic membrane), and thus conserves the redox energy in a proton gradient. In Bradyrhizobium diazoefficiens (strain JCM 10833 / BCRC 13528 / IAM 13628 / NBRC 14792 / USDA 110), this protein is NADH-quinone oxidoreductase subunit B.